We begin with the raw amino-acid sequence, 121 residues long: Amelogenin (121 aa).

Disordered stretches follow at residues 1-20 (LHHQIIPVLSQQQTPTHALQ) and 32-121 (QPMQ…WPAT). Over residues 48–58 (SVTPTQHHQSN) the composition is skewed to polar residues. The segment covering 59–71 (LPQPAQQPFQPQV) has biased composition (low complexity). Over residues 85-111 (PAHPMPPMPQPPLPPMFPMQPLPPLLP) the composition is skewed to pro residues.

This sequence belongs to the amelogenin family.

The protein resides in the secreted. The protein localises to the extracellular space. It is found in the extracellular matrix. Plays a role in the biomineralization of teeth. Seems to regulate the formation of crystallites during the secretory stage of tooth enamel development. Thought to play a major role in the structural organization and mineralization of developing enamel. The sequence is that of Amelogenin (AMEL) from Ornithorhynchus anatinus (Duckbill platypus).